A 179-amino-acid chain; its full sequence is Mediator of RNA polymerase II transcription subunit 29 (179 aa).

This sequence belongs to the Mediator complex subunit 29 family. In terms of assembly, component of the Mediator complex.

The protein resides in the nucleus. Its function is as follows. Component of the Mediator complex, a coactivator involved in the regulated transcription of nearly all RNA polymerase II-dependent genes. Mediator functions as a bridge to convey information from gene-specific regulatory proteins to the basal RNA polymerase II transcription machinery. Mediator is recruited to promoters by direct interactions with regulatory proteins and serves as a scaffold for the assembly of a functional preinitiation complex with RNA polymerase II and the general transcription factors. The protein is Mediator of RNA polymerase II transcription subunit 29 (med29) of Danio rerio (Zebrafish).